Consider the following 420-residue polypeptide: Glucose-1-phosphate adenylyltransferase (420 aa).

Alpha-D-glucose 1-phosphate-binding positions include Y107, G172, E187–K188, and S205.

It belongs to the bacterial/plant glucose-1-phosphate adenylyltransferase family. As to quaternary structure, homotetramer.

The enzyme catalyses alpha-D-glucose 1-phosphate + ATP + H(+) = ADP-alpha-D-glucose + diphosphate. It functions in the pathway glycan biosynthesis; glycogen biosynthesis. Its function is as follows. Involved in the biosynthesis of ADP-glucose, a building block required for the elongation reactions to produce glycogen. Catalyzes the reaction between ATP and alpha-D-glucose 1-phosphate (G1P) to produce pyrophosphate and ADP-Glc. The chain is Glucose-1-phosphate adenylyltransferase from Rhizobium etli (strain CIAT 652).